The sequence spans 485 residues: Probable outer membrane usher protein LpfC' (485 aa).

Belongs to the fimbrial export usher family.

Its subcellular location is the cell outer membrane. Functionally, part of the lpfABCC'DE fimbrial operon. LP fimbriae may participate in the interaction with eukaryotic cells by assisting in microcolony formation. Could be involved in the export and assembly of the fimbrial subunits across the outer membrane. This chain is Probable outer membrane usher protein LpfC' (lpfC'), found in Escherichia coli O157:H7.